The chain runs to 327 residues: Ventral anterior homeobox 1 (327 aa).

A compositionally biased stretch (basic and acidic residues) spans 1 to 34; that stretch reads MFGKQDKMDVRCSTETEANRVSKNGHKEGKDSKG. The segment at 1–41 is disordered; that stretch reads MFGKQDKMDVRCSTETEANRVSKNGHKEGKDSKGAEGNIST. The homeobox DNA-binding region spans 99 to 158; the sequence is PKRTRTSFTAEQLYRLEMEFQRCQYVVGRERTELARQLNLSETQVKVWFQNRRTKQKKDQ. Over residues 230-245 the composition is skewed to low complexity; it reads APAGGSPHPPSAGTAA. A disordered region spans residues 230 to 249; the sequence is APAGGSPHPPSAGTAAGPPP.

Belongs to the EMX homeobox family.

It is found in the nucleus. Its function is as follows. Transcription factor that plays a role in establishing dorsal-ventral polarity in the neural retina. The polypeptide is Ventral anterior homeobox 1 (VAX1) (Gallus gallus (Chicken)).